The sequence spans 457 residues: MSFDFIKNKKVHFIGIGGISMSALAEILLEKGFKVSGSDVKSSEATERLELKGAKVYIGQISQNITSDIDLVVYTAAISKNNEELLKAKDLNIPLMDRAEFLGEIMKGHKYNIAVSGTHGKTTTTSMLSSITLEANLDPTILVGGNLDIIGGNVRIGNSPFFITEACEYKESFLKFFPFIGIILNIDADHLDYYKDIEEIQNAFIKFGKLIPKEGYLVCCADDRRMEKIISNVNCNVMSYGIETGDITAKNICFDKEGRAFFEVYKSDKKLFSLNLSVPGEHNILNALASISVSLILNISVDNIINGLKSFKGTHRRFEIKGQRKGVVVIDDYAHHPTEIKATLNAAKNYPHKRIICVFQPHTFSRTISLFKEFTAAFDNVDELILSDIFPAREKDTGEISSSMLCEQIIKRGVKCRNIKDFDSIVQYLNNILTEGDVLLTIGAGDVFQVGELYLNQ.

ATP is bound at residue 117–123; it reads GTHGKTT.

It belongs to the MurCDEF family.

The protein resides in the cytoplasm. The enzyme catalyses UDP-N-acetyl-alpha-D-muramate + L-alanine + ATP = UDP-N-acetyl-alpha-D-muramoyl-L-alanine + ADP + phosphate + H(+). The protein operates within cell wall biogenesis; peptidoglycan biosynthesis. Cell wall formation. This Clostridium kluyveri (strain NBRC 12016) protein is UDP-N-acetylmuramate--L-alanine ligase.